A 303-amino-acid polypeptide reads, in one-letter code: Acidic endochitinase WIN6.2B (303 aa).

Positions 1–21 are cleaved as a signal peptide; sequence MSVWAFAFFSLFLSLSVRGSA. The 41-residue stretch at 22-62 folds into the Chitin-binding type-1 domain; that stretch reads EQCGQQAGDALCPGGLCCSSYGWCGTTADYCGDGCQSQCDG. Cystine bridges form between Cys24-Cys39, Cys33-Cys45, Cys38-Cys52, and Cys56-Cys60. The tract at residues 82-303 is chitinase; that stretch reads DGYLSDIIPE…YGLLGLKDTM (222 aa). Glu150 serves as the catalytic Proton donor. Residues Cys253 and Cys286 are joined by a disulfide bond.

The protein belongs to the glycosyl hydrolase 19 family. Chitinase class I subfamily.

The enzyme catalyses Random endo-hydrolysis of N-acetyl-beta-D-glucosaminide (1-&gt;4)-beta-linkages in chitin and chitodextrins.. In terms of biological role, defense against chitin-containing fungal pathogens. The chain is Acidic endochitinase WIN6.2B from Populus trichocarpa (Western balsam poplar).